The chain runs to 246 residues: Probable transcriptional regulatory protein HAPS_0943 (246 aa).

It belongs to the TACO1 family.

It localises to the cytoplasm. The protein is Probable transcriptional regulatory protein HAPS_0943 of Glaesserella parasuis serovar 5 (strain SH0165) (Haemophilus parasuis).